Here is a 214-residue protein sequence, read N- to C-terminus: Pyridoxine/pyridoxamine 5'-phosphate oxidase (214 aa).

Residues 9–12 (RREY) and lysine 67 contribute to the substrate site. Residues 62–67 (RTVLLK), 77–78 (YS), arginine 83, lysine 84, and glutamine 106 each bind FMN. The substrate site is built by tyrosine 124, arginine 128, and serine 132. Residues 141–142 (QS) and tryptophan 186 contribute to the FMN site. 192-194 (RLH) is a binding site for substrate. Arginine 196 is an FMN binding site.

The protein belongs to the pyridoxamine 5'-phosphate oxidase family. Homodimer. Requires FMN as cofactor.

It catalyses the reaction pyridoxamine 5'-phosphate + O2 + H2O = pyridoxal 5'-phosphate + H2O2 + NH4(+). The catalysed reaction is pyridoxine 5'-phosphate + O2 = pyridoxal 5'-phosphate + H2O2. It functions in the pathway cofactor metabolism; pyridoxal 5'-phosphate salvage; pyridoxal 5'-phosphate from pyridoxamine 5'-phosphate: step 1/1. It participates in cofactor metabolism; pyridoxal 5'-phosphate salvage; pyridoxal 5'-phosphate from pyridoxine 5'-phosphate: step 1/1. In terms of biological role, catalyzes the oxidation of either pyridoxine 5'-phosphate (PNP) or pyridoxamine 5'-phosphate (PMP) into pyridoxal 5'-phosphate (PLP). This is Pyridoxine/pyridoxamine 5'-phosphate oxidase from Porphyromonas gingivalis (strain ATCC BAA-308 / W83).